Reading from the N-terminus, the 410-residue chain is Mating-type locus allele B3 protein (410 aa).

Positions 1–110 are variable domain between B alleles; it reads MSRDPKLSLS…ANVVSPGEGC (110 aa). Positions 107–184 form a DNA-binding region, homeobox; TALE-type; it reads GEGCRNLSED…NARRRSGWSH (78 aa). The interval 111–410 is highly conserved between B alleles; sequence RNLSEDLPAY…PFLCLSVAFV (300 aa). Disordered stretches follow at residues 203–224 and 278–335; these read AKLSSSNQSTPPSLTSEKPSDD and TPKP…TPEL. The segment covering 205 to 219 has biased composition (polar residues); the sequence is LSSSNQSTPPSLTSE. A Nuclear localization signal motif is present at residues 276-308; the sequence is KKTPKPGMPRPVTTVAKRHPARKTKPAAKPKSR. The span at 291–307 shows a compositional bias: basic residues; that stretch reads AKRHPARKTKPAAKPKS. Residues 312–335 are compositionally biased toward polar residues; the sequence is PRASTTPSIDSTLDSSKLESTPEL. Positions 333–410 are not essential for B3 function; sequence PELSMCSTAD…PFLCLSVAFV (78 aa).

The protein belongs to the TALE/M-ATYP homeobox family.

The protein localises to the nucleus. Its function is as follows. The B locus has at least 25 alleles, and any combination of two different B alleles yields a multimeric regulatory protein, that activates genes responsible for the pathogenicity and for the sexual development of the fungus within the corn plant. This is Mating-type locus allele B3 protein from Mycosarcoma maydis (Corn smut fungus).